The sequence spans 154 residues: Cysteine-rich DPF motif domain-containing protein 1 (154 aa).

The protein belongs to the CDPF1 family.

This Drosophila melanogaster (Fruit fly) protein is Cysteine-rich DPF motif domain-containing protein 1.